Consider the following 312-residue polypeptide: 1-(5-phosphoribosyl)-5-[(5-phosphoribosylamino)methylideneamino] imidazole-4-carboxamide isomerase HISN3, chloroplastic (312 aa).

Residues 1 to 67 (MRSPASTPSI…IHKGKVKQIV (67 aa)) constitute a chloroplast transit peptide. Asp57 contacts 1-(5-phospho-beta-D-ribosyl)-5-[(5-phospho-beta-D-ribosylamino)methylideneamino]imidazole-4-carboxamide. Residue Gln65 participates in 5-[(5-phospho-1-deoxy-D-ribulos-1-ylimino)methylamino]-1-(5-phospho-beta-D-ribosyl)imidazole-4-carboxamide binding. 2 residues coordinate Na(+): Gln65 and Ile66. A 1-(5-phospho-beta-D-ribosyl)-5-[(5-phospho-beta-D-ribosylamino)methylideneamino]imidazole-4-carboxamide-binding site is contributed by Gly68. His108, Gly138, Thr158, and Ser159 together coordinate 5-[(5-phospho-1-deoxy-D-ribulos-1-ylimino)methylamino]-1-(5-phospho-beta-D-ribosyl)imidazole-4-carboxamide. Residues Gly138, Thr158, and Ser159 each coordinate 1-(5-phospho-beta-D-ribosyl)-5-[(5-phospho-beta-D-ribosylamino)methylideneamino]imidazole-4-carboxamide. Na(+)-binding residues include Ser159 and Phe162. Residues Asp187, Arg203, Trp204, and His230 each coordinate 1-(5-phospho-beta-D-ribosyl)-5-[(5-phospho-beta-D-ribosylamino)methylideneamino]imidazole-4-carboxamide. 5-[(5-phospho-1-deoxy-D-ribulos-1-ylimino)methylamino]-1-(5-phospho-beta-D-ribosyl)imidazole-4-carboxamide is bound at residue Asp187. Residue Trp204 coordinates 5-[(5-phospho-1-deoxy-D-ribulos-1-ylimino)methylamino]-1-(5-phospho-beta-D-ribosyl)imidazole-4-carboxamide. A Na(+)-binding site is contributed by Glu235. 1-(5-phospho-beta-D-ribosyl)-5-[(5-phospho-beta-D-ribosylamino)methylideneamino]imidazole-4-carboxamide-binding residues include Gly236, Gly262, Gly285, and Ser286. The 5-[(5-phospho-1-deoxy-D-ribulos-1-ylimino)methylamino]-1-(5-phospho-beta-D-ribosyl)imidazole-4-carboxamide site is built by Gly236, Gly262, Gly285, and Ser286.

The protein belongs to the HisA/HisF family. Na(+) is required as a cofactor.

It is found in the plastid. Its subcellular location is the chloroplast. The enzyme catalyses 1-(5-phospho-beta-D-ribosyl)-5-[(5-phospho-beta-D-ribosylamino)methylideneamino]imidazole-4-carboxamide = 5-[(5-phospho-1-deoxy-D-ribulos-1-ylimino)methylamino]-1-(5-phospho-beta-D-ribosyl)imidazole-4-carboxamide. The protein operates within amino-acid biosynthesis; L-histidine biosynthesis; L-histidine from 5-phospho-alpha-D-ribose 1-diphosphate: step 4/9. In terms of biological role, component of the histidine biosynthesis pathway that catalyzes the isomerization of 5'-ProFAR (pro-phosphoribosyl formimino-5-aminoimidazole-4-carboxamide ribonucleotide, referred as 1-(5-phospho-beta-D-ribosyl)-5-[(5-phospho-beta-D-ribosylamino)methylideneamino]imidazole-4-carboxamide) to PrFAR (phosphoribulosyl formimino-5-aminoimidazole-4-carboxamide ribonucleotide, referred as 5-[(5-phospho-1-deoxy-D-ribulos-1-ylimino)methylamino]-1-(5-phospho-beta-D-ribosyl)imidazole-4-carboxamide). This is 1-(5-phosphoribosyl)-5-[(5-phosphoribosylamino)methylideneamino] imidazole-4-carboxamide isomerase HISN3, chloroplastic from Medicago truncatula (Barrel medic).